The primary structure comprises 130 residues: Phosphomevalonate dehydratase small subunit (130 aa).

The active-site Proton acceptor is Ser-62.

It belongs to the AcnX type II small subunit family. As to quaternary structure, heterodimer composed of a large subunit (PMDh-L) and a small subunit (PMDh-S).

The catalysed reaction is (R)-5-phosphomevalonate = (2E)-3-methyl-5-phosphooxypent-2-enoate + H2O. The protein operates within isoprenoid biosynthesis; isopentenyl diphosphate biosynthesis via mevalonate pathway. Component of a hydro-lyase that catalyzes the dehydration of mevalonate 5-phosphate (MVA5P) to form trans-anhydromevalonate 5-phosphate (tAHMP). Involved in the archaeal mevalonate (MVA) pathway, which provides fundamental precursors for isoprenoid biosynthesis, such as isopentenyl diphosphate (IPP) and dimethylallyl diphosphate (DMAPP). This Thermococcus sibiricus (strain DSM 12597 / MM 739) protein is Phosphomevalonate dehydratase small subunit.